The primary structure comprises 620 residues: Glutathione-regulated potassium-efflux system protein KefC (620 aa).

Residues 1–3 (MDS) lie on the Periplasmic side of the membrane. Residues 4-24 (HTLVQALIYLGSAALIVPIAV) traverse the membrane as a helical segment. Position 25 (Arg25) is a topological domain, cytoplasmic. A helical transmembrane segment spans residues 26 to 46 (LGLGSVLGYLIAGCIIGPWGL). Residues 47 to 53 (RLVTDAE) lie on the Periplasmic side of the membrane. A helical membrane pass occupies residues 54–74 (SILHFAEIGVVLMLFIIGLEL). The Cytoplasmic portion of the chain corresponds to 75–89 (DPQRLWKLRAAVFGG). Residues 90–110 (GALQMVICGGLLGLFCMLLGL) traverse the membrane as a helical segment. Residues 111–113 (RWQ) lie on the Periplasmic side of the membrane. A helical membrane pass occupies residues 114–134 (VAELIGMTLALSSTAIAMQAM). The Cytoplasmic segment spans residues 135-148 (NERNLMVTQMGRSA). Residues 149–169 (FAVLLFQDIAAIPLVAMIPLL) form a helical membrane-spanning segment. The Periplasmic portion of the chain corresponds to 170–177 (AASSASTT). A helical transmembrane segment spans residues 178–198 (MGAFALSALKVAGALVLVVLL). Topologically, residues 199-213 (GRYVTRPALRFVARS) are cytoplasmic. The helical transmembrane segment at 214–233 (GLREVFSAVALFLVFGFGLL) threads the bilayer. Topologically, residues 234–236 (LEE) are periplasmic. Residues 237–254 (VGLSMAMGAFLAGVLLAS) form a helical membrane-spanning segment. Over 255–269 (SEYRHALESDIEPFK) the chain is Cytoplasmic. The helical transmembrane segment at 270 to 290 (GLLLGLFFIGVGMSIDFGTLI) threads the bilayer. Topologically, residues 291–293 (ENP) are periplasmic. Residues 294 to 314 (LRIVILLLGFLIIKIAMLWLI) traverse the membrane as a helical segment. Residues 315–326 (ARPLQVPNKQRR) are Cytoplasmic-facing. A helical membrane pass occupies residues 327-347 (WFAVLLGQGSEFAFVVFGAAQ). The Periplasmic portion of the chain corresponds to 348–358 (MANVLEPEWAK). The helical transmembrane segment at 359 to 379 (SLTLAVALSMAATPILLVILN) threads the bilayer. Over 380–620 (RLEQSSTEEA…ADEPETKPSS (241 aa)) the chain is Cytoplasmic. The 120-residue stretch at 399 to 518 (QPRVIIAGFG…AGVEKPERET (120 aa)) folds into the RCK N-terminal domain. The interval 597–620 (GWQGTEEGKHTGNMADEPETKPSS) is disordered.

It belongs to the monovalent cation:proton antiporter 2 (CPA2) transporter (TC 2.A.37) family. KefC subfamily. Homodimer. Interacts with the regulatory subunit KefF.

Its subcellular location is the cell inner membrane. Pore-forming subunit of a potassium efflux system that confers protection against electrophiles. Catalyzes K(+)/H(+) antiport. The protein is Glutathione-regulated potassium-efflux system protein KefC of Shigella flexneri.